A 180-amino-acid chain; its full sequence is uncharacterized protein (180 aa).

Belongs to the isochorismatase family.

This is an uncharacterized protein from Bacillus subtilis (strain 168).